Here is a 54-residue protein sequence, read N- to C-terminus: Preprotein translocase subunit SecG (54 aa).

Residues Met1–Asp31 lie on the Cytoplasmic side of the membrane. Residues Pro32–Val53 traverse the membrane as a helical segment. Residue Ala54 is a topological domain, extracellular.

Belongs to the SEC61-beta family. Component of the protein translocase complex. Heterotrimer consisting of alpha (SecY), beta (SecG) and gamma (SecE) subunits. Can form oligomers of the heterotrimer.

The protein localises to the cell membrane. Functionally, involved in protein export. The function of the beta subunit is unknown, but it may be involved in stabilization of the trimeric complex. This chain is Preprotein translocase subunit SecG, found in Halorubrum lacusprofundi (strain ATCC 49239 / DSM 5036 / JCM 8891 / ACAM 34).